The chain runs to 457 residues: PE-PGRS family protein PE_PGRS18 (457 aa).

The PE domain maps to 1 to 92 (MSFVNVAPQL…SSTYAVAEAA (92 aa)). NHL repeat units lie at residues 291 to 321 (FNDPHGVAVNPGGNIYVTNQGSNTVSVIDPV), 333 to 363 (NGPSGVAVSPVTGLVFVTNFDSNTVSVIDPN), 379 to 404 (GVAVNPGGNIYVTNQFSNTVSVIDPA), and 419 to 447 (PTGVAVNPVTGVVYVTNSLDDTVSVITGE).

It belongs to the mycobacterial PE family. PGRS subfamily.

It localises to the secreted. Its subcellular location is the cell wall. Enhances mycobacterial intracellular survival, probably via altering host macrophage cytokine profiling and attenuating the cell apoptosis. Could be required for host endothelial-cell invasion. Its function is as follows. Expression in Mycobacterium smegmatis, a nonpathogenic species naturally deficient in PE_PGRS genes, results in alteration of the production of host cytokines, including IL-6, IL-1beta, IL-10 and IL-12p40, as well as enhanced survival within macrophages largely via attenuating the apoptosis of macrophages. This chain is PE-PGRS family protein PE_PGRS18, found in Mycobacterium tuberculosis (strain ATCC 25618 / H37Rv).